Consider the following 207-residue polypeptide: Large ribosomal subunit protein bL9 (207 aa).

Residues 162-176 (QKKEEKAKDEVSATE) are compositionally biased toward basic and acidic residues. Residues 162-207 (QKKEEKAKDEVSATEKDEELMLSSVTNDNDGDGAKEIVVEGTEESQ) form a disordered region.

Belongs to the bacterial ribosomal protein bL9 family.

Its function is as follows. Binds to the 23S rRNA. This chain is Large ribosomal subunit protein bL9, found in Ehrlichia ruminantium (strain Gardel).